The primary structure comprises 1175 residues: DNA ligase 3 (1175 aa).

The segment at 195–243 is disordered; that stretch reads HDFDNDNGDGDDGDGDDNDDDDGDGDSDSDKKKKKSSGGSGSDSGSKKK. Positions 199 to 221 are enriched in acidic residues; sequence NDNGDGDDGDGDDNDDDDGDGDS. Residue Glu281 coordinates ATP. The active-site N6-AMP-lysine intermediate is Lys283. ATP-binding residues include Arg288 and Arg303. Mg(2+) contacts are provided by Glu334 and Glu432. 3 residues coordinate ATP: Lys437, Arg448, and Lys452. 2 disordered regions span residues 612–669 and 829–869; these read PVGK…LKFV and KSSP…KRGR. Composition is skewed to low complexity over residues 622–635 and 829–859; these read TTTT…TTTT and KSSP…SSPS. Positions 883–976 constitute a BRCT 1 domain; sequence PSLPIFEDVN…KLLPLHEDYI (94 aa). The tract at residues 984–1036 is disordered; it reads PDYSQSSSSSSMSIEEEKIVVTTTSDDPSEGNQQQQDKKVIKESKIIQSKDHS. The span at 987-996 shows a compositional bias: low complexity; it reads SQSSSSSSMS. Residues 1004-1018 show a composition bias toward polar residues; that stretch reads VTTTSDDPSEGNQQQ. Over residues 1019–1036 the composition is skewed to basic and acidic residues; the sequence is QDKKVIKESKIIQSKDHS. The 108-residue stretch at 1067 to 1174 folds into the BRCT 2 domain; the sequence is HLLSIFQECI…DLLDVKNYKL (108 aa).

The protein belongs to the ATP-dependent DNA ligase family. Requires Mg(2+) as cofactor.

It localises to the nucleus. The enzyme catalyses ATP + (deoxyribonucleotide)n-3'-hydroxyl + 5'-phospho-(deoxyribonucleotide)m = (deoxyribonucleotide)n+m + AMP + diphosphate.. The alpha isoform interacts with DNA-repair protein XRCC1 and can correct defective DNA strand-break repair and sister chromatid exchange following treatment with ionizing radiation and alkylating agents. The beta isoform does not interact with XRCC1 and may be specifically involved in the completion of homologous recombination events that occur during meiotic prophase. The sequence is that of DNA ligase 3 (lig3) from Dictyostelium discoideum (Social amoeba).